Reading from the N-terminus, the 306-residue chain is tRNA dimethylallyltransferase (306 aa).

Residue 9-16 coordinates ATP; the sequence is GPTAVGKT. Residue 11-16 coordinates substrate; the sequence is TAVGKT. The tract at residues 34–37 is interaction with substrate tRNA; that stretch reads DSRQ.

It belongs to the IPP transferase family. Monomer. Mg(2+) is required as a cofactor.

It carries out the reaction adenosine(37) in tRNA + dimethylallyl diphosphate = N(6)-dimethylallyladenosine(37) in tRNA + diphosphate. Catalyzes the transfer of a dimethylallyl group onto the adenine at position 37 in tRNAs that read codons beginning with uridine, leading to the formation of N6-(dimethylallyl)adenosine (i(6)A). The chain is tRNA dimethylallyltransferase from Roseiflexus castenholzii (strain DSM 13941 / HLO8).